The following is a 197-amino-acid chain: Ubiquitin-conjugating enzyme E2 T (197 aa).

Residues 2–152 (QRASRLKREL…ARQWTEKHAR (151 aa)) form the UBC core domain. Cys86 (glycyl thioester intermediate) is an active-site residue. Residues Lys91 and Lys182 each participate in a glycyl lysine isopeptide (Lys-Gly) (interchain with G-Cter in ubiquitin) cross-link. A disordered region spans residues 149–197 (KHARQKQKADEEEMLDNLPEAGDSRVHNSTQKRKASQLVGIEKKFHPDV). Ser184 carries the phosphoserine modification. Glycyl lysine isopeptide (Lys-Gly) (interchain with G-Cter in SUMO2) cross-links involve residues Lys191 and Lys192.

This sequence belongs to the ubiquitin-conjugating enzyme family. In terms of assembly, directly interacts with FANCL. Interacts with BRCA1. In terms of processing, auto-ubiquitinated. Effects of auto-monoubiquitination at Lys-91 and Lys-182 are unclear: according to a report, monoubiquitination inactivates E2 enzyme activity. In contrast, according to another report, autoubiquitination does not affect E2 enzyme activity.

The protein localises to the nucleus. The enzyme catalyses S-ubiquitinyl-[E1 ubiquitin-activating enzyme]-L-cysteine + [E2 ubiquitin-conjugating enzyme]-L-cysteine = [E1 ubiquitin-activating enzyme]-L-cysteine + S-ubiquitinyl-[E2 ubiquitin-conjugating enzyme]-L-cysteine.. It participates in protein modification; protein ubiquitination. Accepts ubiquitin from the E1 complex and catalyzes its covalent attachment to other proteins. Catalyzes monoubiquitination. Involved in mitomycin-C (MMC)-induced DNA repair. Acts as a specific E2 ubiquitin-conjugating enzyme for the Fanconi anemia complex by associating with E3 ubiquitin-protein ligase FANCL and catalyzing monoubiquitination of FANCD2, a key step in the DNA damage pathway. Also mediates monoubiquitination of FANCL and FANCI. May contribute to ubiquitination and degradation of BRCA1. In vitro able to promote polyubiquitination using all 7 ubiquitin Lys residues, but may prefer 'Lys-11'-, 'Lys-27'-, 'Lys-48'- and 'Lys-63'-linked polyubiquitination. In Homo sapiens (Human), this protein is Ubiquitin-conjugating enzyme E2 T (UBE2T).